The chain runs to 489 residues: Argininosuccinate lyase (489 aa).

The tract at residues glutamine 462 to serine 489 is disordered.

It belongs to the lyase 1 family. Argininosuccinate lyase subfamily.

Its subcellular location is the cytoplasm. The enzyme catalyses 2-(N(omega)-L-arginino)succinate = fumarate + L-arginine. It functions in the pathway amino-acid biosynthesis; L-arginine biosynthesis; L-arginine from L-ornithine and carbamoyl phosphate: step 3/3. In Synechococcus sp. (strain JA-3-3Ab) (Cyanobacteria bacterium Yellowstone A-Prime), this protein is Argininosuccinate lyase.